We begin with the raw amino-acid sequence, 205 residues long: Small ribosomal subunit protein uS5 (205 aa).

The region spanning 49-112 (LVDEVLCIDM…TNAKLNIVKV (64 aa)) is the S5 DRBM domain.

Belongs to the universal ribosomal protein uS5 family. Part of the 30S ribosomal subunit. Contacts protein S4.

Its function is as follows. With S4 and S12 plays an important role in translational accuracy. This is Small ribosomal subunit protein uS5 from Methanocorpusculum labreanum (strain ATCC 43576 / DSM 4855 / Z).